Reading from the N-terminus, the 1083-residue chain is Ubiquitin carboxyl-terminal hydrolase 1 (1083 aa).

Residues 30-165 (RSCVHFDKYV…KKDLLLEVVK (136 aa)) form a UBP-type zinc finger. Positions 32, 34, 56, 59, 95, 98, 103, 115, 119, 125, 139, and 142 each coordinate Zn(2+). Residues 202-1083 (RGLVNLGNTC…EAYILFYERI (882 aa)) enclose the USP domain. The active-site Nucleophile is cysteine 211. 2 disordered regions span residues 387–424 (KDSEVVSAKPASDHNSTVPLFPSDHKIQSRPETSDNET) and 450–486 (GSTETLMHDNDRTGKTVPDKEDVRATQSNEETSASGI). Basic and acidic residues-rich tracts occupy residues 409-419 (SDHKIQSRPET) and 455-473 (LMHDNDRTGKTVPDKEDVR). Polar residues predominate over residues 474–485 (ATQSNEETSASG). The Proton acceptor role is filled by histidine 1029.

Belongs to the peptidase C19 family.

It catalyses the reaction Thiol-dependent hydrolysis of ester, thioester, amide, peptide and isopeptide bonds formed by the C-terminal Gly of ubiquitin (a 76-residue protein attached to proteins as an intracellular targeting signal).. Its function is as follows. Recognizes and hydrolyzes the peptide bond at the C-terminal Gly of ubiquitin. Involved in the processing of poly-ubiquitin precursors as well as that of ubiquitinated proteins. Is involved in resistance to the arginine analog canavanine (CAN). This chain is Ubiquitin carboxyl-terminal hydrolase 1 (UBP1), found in Arabidopsis thaliana (Mouse-ear cress).